We begin with the raw amino-acid sequence, 205 residues long: GTP cyclohydrolase-2 (205 aa).

49 to 53 (RIHSE) is a GTP binding site. Zn(2+)-binding residues include Cys-54, Cys-65, and Cys-67. Residues Gln-70, 92 to 94 (EGR), and Thr-114 contribute to the GTP site. Catalysis depends on Asp-126, which acts as the Proton acceptor. Arg-128 acts as the Nucleophile in catalysis. GTP-binding residues include Thr-149 and Lys-154.

The protein belongs to the GTP cyclohydrolase II family. Zn(2+) serves as cofactor.

It catalyses the reaction GTP + 4 H2O = 2,5-diamino-6-hydroxy-4-(5-phosphoribosylamino)-pyrimidine + formate + 2 phosphate + 3 H(+). The protein operates within cofactor biosynthesis; riboflavin biosynthesis; 5-amino-6-(D-ribitylamino)uracil from GTP: step 1/4. Functionally, catalyzes the conversion of GTP to 2,5-diamino-6-ribosylamino-4(3H)-pyrimidinone 5'-phosphate (DARP), formate and pyrophosphate. The sequence is that of GTP cyclohydrolase-2 from Shewanella sediminis (strain HAW-EB3).